The sequence spans 197 residues: Elongation factor Ts (197 aa).

Residues 81 to 84 are involved in Mg(2+) ion dislocation from EF-Tu; sequence TDFV.

It belongs to the EF-Ts family.

The protein resides in the cytoplasm. In terms of biological role, associates with the EF-Tu.GDP complex and induces the exchange of GDP to GTP. It remains bound to the aminoacyl-tRNA.EF-Tu.GTP complex up to the GTP hydrolysis stage on the ribosome. The chain is Elongation factor Ts from Petrotoga mobilis (strain DSM 10674 / SJ95).